A 440-amino-acid chain; its full sequence is Transposon Ty1-ML1 Gag polyprotein (440 aa).

Composition is skewed to polar residues over residues 1 to 23 (MESQ…SVTS), 48 to 60 (TKAN…TPAS), and 127 to 152 (QSQF…GNTF). 3 disordered regions span residues 1–88 (MESQ…YPQQ), 126–173 (PQSQ…RPPP), and 352–440 (GSRN…PETY). The segment covering 153-165 (TDSSSADSDMTST) has biased composition (low complexity). The RNA-binding stretch occupies residues 299–401 (NNGIHINNKV…NSKSKTARAH (103 aa)). Residues 402-418 (NVSTSNNSPSTDNDSIS) show a composition bias toward low complexity. Serine 416 carries the post-translational modification Phosphoserine. Residues 419 to 428 (KSTTEPIQLN) are compositionally biased toward polar residues. Basic and acidic residues predominate over residues 429-440 (NKHDLHLRPETY).

Homotrimer.

It localises to the cytoplasm. In terms of biological role, capsid protein (CA) is the structural component of the virus-like particle (VLP), forming the shell that encapsulates the retrotransposons dimeric RNA genome. The particles are assembled from trimer-clustered units and there are holes in the capsid shells that allow for the diffusion of macromolecules. CA also has nucleocapsid-like chaperone activity, promoting primer tRNA(i)-Met annealing to the multipartite primer-binding site (PBS), dimerization of Ty1 RNA and initiation of reverse transcription. This chain is Transposon Ty1-ML1 Gag polyprotein (TY1A-ML1), found in Saccharomyces cerevisiae (strain ATCC 204508 / S288c) (Baker's yeast).